An 82-amino-acid polypeptide reads, in one-letter code: Large ribosomal subunit protein uL23 (82 aa).

This sequence belongs to the universal ribosomal protein uL23 family. In terms of assembly, part of the 50S ribosomal subunit. Contacts protein L29.

Functionally, binds to 23S rRNA. One of the proteins that surrounds the polypeptide exit tunnel on the outside of the ribosome. The polypeptide is Large ribosomal subunit protein uL23 (Methanosarcina barkeri (strain Fusaro / DSM 804)).